We begin with the raw amino-acid sequence, 247 residues long: Protein McbF (247 aa).

One can recognise an ABC transporter domain in the interval 6–234 (LEINSLSFSY…NNETTQKRHL (229 aa)). 40–47 (GENPAGKT) provides a ligand contact to ATP.

It belongs to the ABC transporter superfamily.

Together with two further proteins McbE and McbG this protein causes immunity to the peptide antibiotic microcin B17, which inhibits DNA replication in enterobacteriaceae. Immunity is determined by two different mechanisms. McbE is involved in the production of extracellular MccB17 and, in a complex with mcbf it also serves as 'pump' for the export of active MccB17 from the cytoplasm to the periplasmic space. The sequence is that of Protein McbF (mcbF) from Escherichia coli.